Consider the following 212-residue polypeptide: MADLIVRSLGQQPYMETWEAMKSFTANRDETTVDELWCLEHPRVFTQGQAGKAEHILLPGDIPVIQVDRGGQVTYHGPGQLVIYLLIDLTRHKLGVRNLVSAIEQAIVRTLAQGGIEAAPRSDAPGVYVNGAKIASLGLRVRRGCSFHGLALNVNMDMEPFSRINPCGYAGMSMCQVSDFEAGASVYDLERRLVSELVEGLGHSQVEQRQGW.

Residues 30–205 form the BPL/LPL catalytic domain; sequence ETTVDELWCL…ELVEGLGHSQ (176 aa). Substrate-binding positions include 69–76, 136–138, and 149–151; these read RGGQVTYH, SLG, and GLA. The active-site Acyl-thioester intermediate is cysteine 167.

This sequence belongs to the LipB family.

It localises to the cytoplasm. The catalysed reaction is octanoyl-[ACP] + L-lysyl-[protein] = N(6)-octanoyl-L-lysyl-[protein] + holo-[ACP] + H(+). It participates in protein modification; protein lipoylation via endogenous pathway; protein N(6)-(lipoyl)lysine from octanoyl-[acyl-carrier-protein]: step 1/2. Catalyzes the transfer of endogenously produced octanoic acid from octanoyl-acyl-carrier-protein onto the lipoyl domains of lipoate-dependent enzymes. Lipoyl-ACP can also act as a substrate although octanoyl-ACP is likely to be the physiological substrate. This Marinobacter nauticus (strain ATCC 700491 / DSM 11845 / VT8) (Marinobacter aquaeolei) protein is Octanoyltransferase.